The sequence spans 405 residues: Amino acid transporter AVT1I (405 aa).

11 helical membrane passes run 22 to 42 (CFNA…YSLA), 46 to 66 (WLSL…SLLI), 93 to 113 (IIVS…FLIL), 140 to 160 (FMAT…LSVL), 169 to 189 (LATT…GIGF), 201 to 221 (IPTA…LPTL), 234 to 254 (VLLI…VLGY), 278 to 298 (VAIY…ITPT), 318 to 338 (LLIS…LPFF), 343 to 363 (SLVG…LCYL), and 377 to 397 (IMLF…TYIA).

The protein belongs to the amino acid/polyamine transporter 2 family. Amino acid/auxin permease (AAAP) (TC 2.A.18.5) subfamily.

The protein localises to the membrane. This is Amino acid transporter AVT1I from Arabidopsis thaliana (Mouse-ear cress).